The primary structure comprises 325 residues: Clavaminate synthase 2 (325 aa).

Fe cation contacts are provided by histidine 145, glutamate 147, and histidine 280. Position 294 (arginine 294) interacts with 2-oxoglutarate.

This sequence belongs to the clavaminate synthase family. It depends on Fe(2+) as a cofactor.

It catalyses the reaction deoxyamidinoproclavaminate + 2-oxoglutarate + O2 = amidinoproclavaminate + succinate + CO2. It carries out the reaction proclavaminate + 2-oxoglutarate + O2 = dihydroclavaminate + succinate + CO2 + H2O. The catalysed reaction is dihydroclavaminate + 2-oxoglutarate + O2 = clavaminate + succinate + CO2 + H2O. Its pathway is antibiotic biosynthesis; clavulanate biosynthesis; clavulanate from D-glyceraldehyde 3-phosphate and L-arginine: step 3/8. It participates in antibiotic biosynthesis; clavulanate biosynthesis; clavulanate from D-glyceraldehyde 3-phosphate and L-arginine: step 5/8. The protein operates within antibiotic biosynthesis; clavulanate biosynthesis; clavulanate from D-glyceraldehyde 3-phosphate and L-arginine: step 6/8. The chain is Clavaminate synthase 2 (cs2) from Streptomyces clavuligerus.